Reading from the N-terminus, the 320-residue chain is FHA domain-containing protein FHA2 (320 aa).

A2 is modified (N-acetylalanine). Residues 32 to 89 form the FHA domain; it reads IILGRNSKKATVDVDLSSLGGGMNISRNHARIFYDFTRRRFSLEVLGKNGCLVEGVLH. The disordered stretch occupies residues 138 to 211; that stretch reads VPYHNYQSGP…REGRSKVDRE (74 aa). Residues 163 to 178 are compositionally biased toward acidic residues; sequence EYDDEDDDDDDDEEDD. Basic and acidic residues predominate over residues 198-210; that stretch reads GEKKREGRSKVDR.

In terms of tissue distribution, widely expressed.

The protein resides in the nucleus. In terms of biological role, may play a role in the control of plant organ development and specifically in the regulation of stamen development. Does not show transactivation activity in yeast. The protein is FHA domain-containing protein FHA2 of Arabidopsis thaliana (Mouse-ear cress).